The following is a 238-amino-acid chain: Transcriptional activator protein AnoR (238 aa).

The 67-residue stretch at glutamate 170–glycine 236 folds into the HTH luxR-type domain. Residues serine 195–cysteine 214 constitute a DNA-binding region (H-T-H motif).

It belongs to the autoinducer-regulated transcriptional regulatory protein family.

Positively regulates the expression of anoI. Required for biofilm formation and motility. Probably part of a quorum-sensing system with AnoI. This Acinetobacter nosocomialis protein is Transcriptional activator protein AnoR.